The following is a 258-amino-acid chain: Thiazole synthase (258 aa).

The active-site Schiff-base intermediate with DXP is K100. Residues G161, 187–188 (AG), and 209–210 (NT) contribute to the 1-deoxy-D-xylulose 5-phosphate site.

Belongs to the ThiG family. As to quaternary structure, homotetramer. Forms heterodimers with either ThiH or ThiS.

The protein localises to the cytoplasm. The enzyme catalyses [ThiS sulfur-carrier protein]-C-terminal-Gly-aminoethanethioate + 2-iminoacetate + 1-deoxy-D-xylulose 5-phosphate = [ThiS sulfur-carrier protein]-C-terminal Gly-Gly + 2-[(2R,5Z)-2-carboxy-4-methylthiazol-5(2H)-ylidene]ethyl phosphate + 2 H2O + H(+). Its pathway is cofactor biosynthesis; thiamine diphosphate biosynthesis. Functionally, catalyzes the rearrangement of 1-deoxy-D-xylulose 5-phosphate (DXP) to produce the thiazole phosphate moiety of thiamine. Sulfur is provided by the thiocarboxylate moiety of the carrier protein ThiS. In vitro, sulfur can be provided by H(2)S. In Campylobacter jejuni (strain RM1221), this protein is Thiazole synthase.